The primary structure comprises 321 residues: Sideroflexin-3 (321 aa).

Methionine 1 carries the post-translational modification N-acetylmethionine. A run of 4 helical transmembrane segments spans residues 146 to 164 (LGTAYVSATTGAVATALGL), 174 to 194 (LVGRFVPFAAVAAANCINIPL), 225 to 245 (IFQVVVSRIGMAIPAMAIPPV), and 266 to 286 (LQVGLVGFCLVFATPLCCALF).

This sequence belongs to the sideroflexin family.

Its subcellular location is the mitochondrion membrane. The catalysed reaction is L-serine(in) = L-serine(out). Its function is as follows. Mitochondrial serine transporter that mediates transport of serine into mitochondria, an important step of the one-carbon metabolism pathway. Mitochondrial serine is converted to glycine and formate, which then exits to the cytosol where it is used to generate the charged folates that serve as one-carbon donors. The polypeptide is Sideroflexin-3 (Sfxn3) (Rattus norvegicus (Rat)).